A 359-amino-acid chain; its full sequence is DNA replication and repair protein RecF (359 aa).

ATP is bound at residue 30–37 (GPNGSGKT).

This sequence belongs to the RecF family.

The protein resides in the cytoplasm. Functionally, the RecF protein is involved in DNA metabolism; it is required for DNA replication and normal SOS inducibility. RecF binds preferentially to single-stranded, linear DNA. It also seems to bind ATP. The chain is DNA replication and repair protein RecF from Aliivibrio salmonicida (strain LFI1238) (Vibrio salmonicida (strain LFI1238)).